Consider the following 281-residue polypeptide: Phosphatidylglycerol--prolipoprotein diacylglyceryl transferase (281 aa).

A run of 7 helical transmembrane segments spans residues 11–31 (IIFT…VISF), 57–77 (LLYA…IIFY), 89–109 (VFYI…AIIV), 121–141 (ILEI…AGRI), 194–214 (PTQL…IYFF), 222–242 (GSIS…IEFF), and 255–275 (IITM…IIMY). A 1,2-diacyl-sn-glycero-3-phospho-(1'-sn-glycerol) is bound at residue R140.

Belongs to the Lgt family.

It is found in the cell inner membrane. It catalyses the reaction L-cysteinyl-[prolipoprotein] + a 1,2-diacyl-sn-glycero-3-phospho-(1'-sn-glycerol) = an S-1,2-diacyl-sn-glyceryl-L-cysteinyl-[prolipoprotein] + sn-glycerol 1-phosphate + H(+). The protein operates within protein modification; lipoprotein biosynthesis (diacylglyceryl transfer). Its function is as follows. Catalyzes the transfer of the diacylglyceryl group from phosphatidylglycerol to the sulfhydryl group of the N-terminal cysteine of a prolipoprotein, the first step in the formation of mature lipoproteins. In Buchnera aphidicola subsp. Acyrthosiphon pisum (strain Tuc7), this protein is Phosphatidylglycerol--prolipoprotein diacylglyceryl transferase.